An 805-amino-acid chain; its full sequence is MTNEEPVPSTSSVLSAAEKNVKIETPSRKRKGLDIDALWRKKFKDVENQKSPEKSEKSEKTIKEEPLETHPSGERKLRSASKDSKSLSKETHNTISTRSSSSGTPRKKMEPEDVKPNIKMLKKSLPVSFQCSNLNDGTVGDASVMLDPTKISLHSSSVAYGEESQDEMEVIQHSTDDPNGTREEFDYNQIEYGNAVTPNGTYTLYAPDSNYAPYYQYSNNMQSSPQDNAPYLVPAPQSPVSIDDADSINLPNNQRASPATVNWLFENYEIGEGSLPRCELYDHYKKHCAEHRMDPVNAASFGKLIRSVFHNLKTRRLGTRGNSKYHYYGIRLKDSSTLHSMQHPQPQIIQNTYTPPMQLPQRDAYADTVNQVAAIKYMDVEIPDKRARKDNSSSSSSCRDSVSPCMDLPAQQTIQHTPVHSVIPSTQQPAPLHNNNVVSYVVTESDKAAMGKIDLPIVPFPDKDALMATIGFRKLGVGEEELNSLIDIYEILCREILALIKNIDFASVEDTWSKFWSGNFGVDRDHISALCTLDQVQDYIIEVDLALYQTIVDTLIPNVLLSELSTGMTQTCRTFAKNIDVYLRKSLMLANLGEFFVKKKIQAIKYLQQGLKRYTSLNHLAHASRGVLMKPEQVQQMYQDYIRVDINTVHQQAGWICGCDSVMVHHVNNAFKHNLQRMSAMEVWAEWLESIVDQVLAKYHDKPANVIANVGKQFLLNWSFYTSMIIRDLTLRSAMSFGSFTLIRLLADDYMYYLIESKIAKAGKQQLITVIRADKDWPLTTNPQEYIVVANDNDEDLDLEKAGLL.

Residues 1-14 (MTNEEPVPSTSSVL) are compositionally biased toward polar residues. The disordered stretch occupies residues 1–113 (MTNEEPVPST…TPRKKMEPED (113 aa)). Basic and acidic residues predominate over residues 19 to 92 (KNVKIETPSR…DSKSLSKETH (74 aa)). The span at 93 to 104 (NTISTRSSSSGT) shows a compositional bias: polar residues. The segment at residues 260 to 334 (TVNWLFENYE…YHYYGIRLKD (75 aa)) is a DNA-binding region (RFX-type winged-helix).

It belongs to the RFX family. In terms of tissue distribution, ciliated sensory neurons. As to expression, expressed in the male tail HOB and RnB neurons but not in male-specific CEM head neurons or other ciliated neurons.

The protein resides in the nucleus. Its function is as follows. Probable transcription factor. May regulate some genes of ciliated sensory neurons. May activate the expression of the shared components of sensory cilia, but not the cell-type-specific expression. Together with transcription factor atf-7, involved in regulation of the serotonergic response of ADF neurons to pathogenic food. Involved in male mating behavior; may play a role in functional specialization of PKD ciliated sensory neurons. The polypeptide is RFX-like transcription factor daf-19 (Caenorhabditis elegans).